The primary structure comprises 66 residues: Large ribosomal subunit protein bL35 (66 aa).

This sequence belongs to the bacterial ribosomal protein bL35 family.

The chain is Large ribosomal subunit protein bL35 from Acholeplasma laidlawii (strain PG-8A).